The primary structure comprises 557 residues: Urocanate hydratase (557 aa).

A disordered region spans residues methionine 1 to asparagine 20. Residues glycine 52 to glycine 53, glutamine 130, glycine 176 to glycine 178, glutamate 196, arginine 201, asparagine 242 to alanine 243, glutamine 263 to histidine 267, tyrosine 273 to leucine 274, and tyrosine 322 each bind NAD(+). Cysteine 410 is an active-site residue. Residue glycine 492 coordinates NAD(+).

It belongs to the urocanase family. NAD(+) is required as a cofactor.

It is found in the cytoplasm. The enzyme catalyses 4-imidazolone-5-propanoate = trans-urocanate + H2O. The protein operates within amino-acid degradation; L-histidine degradation into L-glutamate; N-formimidoyl-L-glutamate from L-histidine: step 2/3. Its function is as follows. Catalyzes the conversion of urocanate to 4-imidazolone-5-propionate. The chain is Urocanate hydratase from Brucella ovis (strain ATCC 25840 / 63/290 / NCTC 10512).